The chain runs to 208 residues: GTP-binding protein YPTM1 (208 aa).

Residues 15-23, 33-40, 63-67, 121-124, and 151-153 contribute to the GTP site; these read GDSSVGKSC, YVDSYIST, DTAGQ, NKCD, and SAK. An Effector region motif is present at residues 37 to 45; the sequence is YISTIGVDF. The tract at residues 189–208 is disordered; that stretch reads QMKGRPIQQEQQKSSRCCST. Residues 196–208 show a composition bias toward polar residues; sequence QQEQQKSSRCCST. Residues cysteine 205 and cysteine 206 are each lipidated (S-geranylgeranyl cysteine).

It belongs to the small GTPase superfamily. Rab family. Low levels in coleoptiles.

The protein resides in the cell membrane. Functionally, protein transport. Probably involved in vesicular traffic. The protein is GTP-binding protein YPTM1 (YPTM1) of Zea mays (Maize).